A 223-amino-acid polypeptide reads, in one-letter code: SCMKAAPMKEVSIRGQGSLAYPGLWTQGNLETLSGPNDATRGLTSLADTFEHVIEELLDEQQVVQPSKENKDADLYSSRVMLSSQVPLEPPLLFLLEEYKNYLDAANMSMRVRRHSDPARRGELSVCDSISEWVTAAEKKTAVDMSGATVTVLEKVPVPKGQLKQYFYETKCSSKGYAKEGCRGIDKRYWNSQCRTTQSYVRALTMDNKKRVGWRFIRIDTSC.

Positions 1–5 (SCMKA) are cleaved as a signal peptide. The propeptide occupies 6-114 (APMKEVSIRG…AANMSMRVRR (109 aa)). The N-linked (GlcNAc...) asparagine glycan is linked to Asn107. 2 cysteine pairs are disulfide-bonded: Cys127-Cys194 and Cys172-Cys223.

The protein belongs to the NGF-beta family.

Its subcellular location is the secreted. In terms of biological role, promotes the survival of neuronal populations that are all located either in the central nervous system or directly connected to it. The sequence is that of Neurotrophic factor BDNF precursor form (BDNF) from Lichanura trivirgata (Rosy boa).